Here is a 510-residue protein sequence, read N- to C-terminus: Inositol-3-phosphate synthase (510 aa).

NAD(+) is bound by residues glycine 70, glycine 71, asparagine 72, asparagine 73, aspartate 143, isoleucine 180, glutamine 190, arginine 193, threonine 230, alanine 231, asparagine 232, threonine 233, glycine 281, serine 282, aspartate 306, serine 309, asparagine 340, asparagine 341, aspartate 342, lysine 355, glycine 393, aspartate 394, aspartate 422, and serine 423.

This sequence belongs to the myo-inositol 1-phosphate synthase family. NAD(+) is required as a cofactor.

It is found in the cytoplasm. The protein localises to the cytosol. It localises to the nucleus. It carries out the reaction D-glucose 6-phosphate = 1D-myo-inositol 3-phosphate. The protein operates within polyol metabolism; myo-inositol biosynthesis; myo-inositol from D-glucose 6-phosphate: step 1/2. Key enzyme in myo-inositol biosynthesis pathway that catalyzes the conversion of glucose 6-phosphate to 1-myo-inositol 1-phosphate in a NAD-dependent manner. The sequence is that of Inositol-3-phosphate synthase from Hordeum vulgare (Barley).